Consider the following 264-residue polypeptide: Thymidylate synthase (264 aa).

Arg-21 provides a ligand contact to dUMP. Residue His-51 participates in (6R)-5,10-methylene-5,6,7,8-tetrahydrofolate binding. 126 to 127 (RR) is a dUMP binding site. The active-site Nucleophile is Cys-146. DUMP-binding positions include 166–169 (RSAD), Asn-177, and 207–209 (HIY). Asp-169 serves as a coordination point for (6R)-5,10-methylene-5,6,7,8-tetrahydrofolate. Ser-263 contributes to the (6R)-5,10-methylene-5,6,7,8-tetrahydrofolate binding site.

This sequence belongs to the thymidylate synthase family. Bacterial-type ThyA subfamily. Homodimer.

It is found in the cytoplasm. The enzyme catalyses dUMP + (6R)-5,10-methylene-5,6,7,8-tetrahydrofolate = 7,8-dihydrofolate + dTMP. The protein operates within pyrimidine metabolism; dTTP biosynthesis. In terms of biological role, catalyzes the reductive methylation of 2'-deoxyuridine-5'-monophosphate (dUMP) to 2'-deoxythymidine-5'-monophosphate (dTMP) while utilizing 5,10-methylenetetrahydrofolate (mTHF) as the methyl donor and reductant in the reaction, yielding dihydrofolate (DHF) as a by-product. This enzymatic reaction provides an intracellular de novo source of dTMP, an essential precursor for DNA biosynthesis. This Bacillus velezensis (strain DSM 23117 / BGSC 10A6 / LMG 26770 / FZB42) (Bacillus amyloliquefaciens subsp. plantarum) protein is Thymidylate synthase.